The chain runs to 456 residues: tRNA-2-methylthio-N(6)-dimethylallyladenosine synthase (456 aa).

The MTTase N-terminal domain occupies 9–126; that stretch reads KKLYIKTHGC…LPEMMETKKS (118 aa). Residues cysteine 18, cysteine 55, cysteine 89, cysteine 163, cysteine 167, and cysteine 170 each contribute to the [4Fe-4S] cluster site. Residues 149-381 form the Radical SAM core domain; that stretch reads DADGVSAFVS…QDRITQQAMA (233 aa). A TRAM domain is found at 384–448; it reads RRMVGNTERI…PNSLRGSLIA (65 aa).

This sequence belongs to the methylthiotransferase family. MiaB subfamily. Monomer. Requires [4Fe-4S] cluster as cofactor.

It is found in the cytoplasm. The enzyme catalyses N(6)-dimethylallyladenosine(37) in tRNA + (sulfur carrier)-SH + AH2 + 2 S-adenosyl-L-methionine = 2-methylsulfanyl-N(6)-dimethylallyladenosine(37) in tRNA + (sulfur carrier)-H + 5'-deoxyadenosine + L-methionine + A + S-adenosyl-L-homocysteine + 2 H(+). Its function is as follows. Catalyzes the methylthiolation of N6-(dimethylallyl)adenosine (i(6)A), leading to the formation of 2-methylthio-N6-(dimethylallyl)adenosine (ms(2)i(6)A) at position 37 in tRNAs that read codons beginning with uridine. This Cellvibrio japonicus (strain Ueda107) (Pseudomonas fluorescens subsp. cellulosa) protein is tRNA-2-methylthio-N(6)-dimethylallyladenosine synthase.